Here is a 602-residue protein sequence, read N- to C-terminus: Elongation factor 4 (602 aa).

The region spanning 8–189 (KNIRNFSIIA…KIITTIPAPS (182 aa)) is the tr-type G domain. GTP-binding positions include 20–25 (DHGKST) and 136–139 (NKID).

Belongs to the TRAFAC class translation factor GTPase superfamily. Classic translation factor GTPase family. LepA subfamily.

It is found in the cell inner membrane. It catalyses the reaction GTP + H2O = GDP + phosphate + H(+). Functionally, required for accurate and efficient protein synthesis under certain stress conditions. May act as a fidelity factor of the translation reaction, by catalyzing a one-codon backward translocation of tRNAs on improperly translocated ribosomes. Back-translocation proceeds from a post-translocation (POST) complex to a pre-translocation (PRE) complex, thus giving elongation factor G a second chance to translocate the tRNAs correctly. Binds to ribosomes in a GTP-dependent manner. This chain is Elongation factor 4, found in Helicobacter pylori (strain ATCC 700392 / 26695) (Campylobacter pylori).